We begin with the raw amino-acid sequence, 486 residues long: Ribosomal RNA small subunit methyltransferase F (486 aa).

S-adenosyl-L-methionine is bound by residues 124–130 (ASAPGSK), Glu148, Asp175, and Asp193. Residue Cys246 is the Nucleophile of the active site.

It belongs to the class I-like SAM-binding methyltransferase superfamily. RsmB/NOP family.

The protein resides in the cytoplasm. The catalysed reaction is cytidine(1407) in 16S rRNA + S-adenosyl-L-methionine = 5-methylcytidine(1407) in 16S rRNA + S-adenosyl-L-homocysteine + H(+). Functionally, specifically methylates the cytosine at position 1407 (m5C1407) of 16S rRNA. The chain is Ribosomal RNA small subunit methyltransferase F from Shewanella baltica (strain OS195).